The chain runs to 400 residues: Deoxyguanosinetriphosphate triphosphohydrolase-like protein (400 aa).

An HD domain is found at 73–215 (RLTHSIEVSQ…AAIADDIAYN (143 aa)).

The protein belongs to the dGTPase family. Type 2 subfamily.

This chain is Deoxyguanosinetriphosphate triphosphohydrolase-like protein, found in Bartonella tribocorum (strain CIP 105476 / IBS 506).